A 245-amino-acid chain; its full sequence is Probable inactive carboxylesterase Os04g0669700 (245 aa).

Active-site charge relay system residues include S115 and H201.

Belongs to the AB hydrolase superfamily. AB hydrolase 2 family.

This is Probable inactive carboxylesterase Os04g0669700 from Oryza sativa subsp. japonica (Rice).